Consider the following 258-residue polypeptide: Snake venom serine protease 1 (258 aa).

An N-terminal signal peptide occupies residues 1 to 18 (MVLIRVLANLLILQLSYA). Positions 19–24 (QKSSEL) are excised as a propeptide. The 225-residue stretch at 25–249 (VVGGDECNIN…YNDWIKSIIA (225 aa)) folds into the Peptidase S1 domain. Disulfide bonds link cysteine 31–cysteine 163, cysteine 50–cysteine 66, cysteine 98–cysteine 256, cysteine 142–cysteine 210, cysteine 174–cysteine 189, and cysteine 200–cysteine 225. N-linked (GlcNAc...) asparagine glycosylation is present at asparagine 44. Residues histidine 65 and aspartate 110 each act as charge relay system in the active site. Serine 204 (charge relay system) is an active-site residue.

This sequence belongs to the peptidase S1 family. Snake venom subfamily. Monomer. As to expression, expressed by the venom gland.

The protein localises to the secreted. Its function is as follows. Snake venom serine protease that may act in the hemostasis system of the prey. The sequence is that of Snake venom serine protease 1 (TLG1) from Craspedocephalus gramineus (Bamboo pit viper).